Consider the following 263-residue polypeptide: Peptidoglycan-N-acetylmuramic acid deacetylase PdaA (263 aa).

The first 23 residues, 1–23 (MKWMCSICCAAVLLAGGAAQAEA), serve as a signal peptide directing secretion. The NodB homology domain maps to 66-247 (KTIYLTFDNG…DLKKQGYTFK (182 aa)). Catalysis depends on D73, which acts as the Proton acceptor. A divalent metal cation-binding residues include H124 and H128. H222 functions as the Proton donor in the catalytic mechanism.

This sequence belongs to the polysaccharide deacetylase family.

In terms of biological role, catalyzes the deacetylation of N-acetylmuramic acid (MurNAc) residues in glycan strands of peptidoglycan, leading to the formation of muramic delta-lactam residues in spore cortex, after transpeptidation of deacetylated muramic acid residues. PdaA probably carries out both deacetylation and lactam ring formation and requires the product of CwlD activity on peptidoglycan as a substrate. Is required for germination. Cannot use chitin oligomer (hexa-N-acetylchitohexaose) as a substrate. This chain is Peptidoglycan-N-acetylmuramic acid deacetylase PdaA (pdaA), found in Bacillus subtilis (strain 168).